A 134-amino-acid chain; its full sequence is Ribonuclease VapC1 (134 aa).

The region spanning 3-132 is the PINc domain; it reads YMLDTNIIIY…RITDLQWQDW (130 aa). Residues D6 and D99 each coordinate Mg(2+).

Belongs to the PINc/VapC protein family. As to quaternary structure, forms a complex with VapB1. Requires Mg(2+) as cofactor.

Toxic component of a type II toxin-antitoxin (TA) system. Upon expression in E.coli inhibits growth in liquid culture. Its toxic effect is neutralized by coexpression with antitoxin VapB1. Degrades RNA but not ss- or ds-DNA in vitro, degradation is inhibited by VapB1 antitoxin. This chain is Ribonuclease VapC1, found in Haemophilus influenzae (strain R2866).